A 1034-amino-acid polypeptide reads, in one-letter code: MHQKIVECIPLWSRNLNSNVKGMRGEGIACLLIVLCSIIYRTEAQRIETNFNNNWHFILKDSPDFSKENLDDSSWELLNVPHDWSFEKGVRKGGDQGQGGGYHDGGIGWYRKTFSFSKASLSKTTYINFDGVYMNSEVWINGNRLGKRPYGYISFRYDISKYLKVGKNTIAVRVDNGLEPSARWYHSCGIYAPVKLVEVNPTHFKPNTIFIKTPSIEKQQGVVSIDAEIKGAFKGLKYNVELLTANGKVIATHSEKLASAQPSVQLEVKPPKLWSPESPNLYKAKTQILDGKKVIDEKTTTFGFRTVAWKTETGFWLNGENVKLKGVCEHWEGGPVGGAWTKPMLRWKLQSLKDMGINAIRPSHNSTPPMFYDICDEIGLLVMDEIFDGWHKKAPEDYGKQAFDEWWQADVKEWITRDRNHPSIFVWSLGNETHSDVAPEMVAFGKNLDPTRLFTSGAGNPEDMDIQGVNGGSETKSFIENNKLTKPFISTEAPHTWQTRGYYRTQTWWRDNELSGTYELPNLTEKEVFFYEGINPKNWKNRKQRFNSSYDNATVRVSARKYWEVMRDTPWHSGHFRWTGFDYYGEAGLVHGGLPFNLFMGGALDVAGFKKDLYYFYQSQWTEKPMIHMLPHWTHPRMKKGTVIPVWVYANADEVELFLNGISLGKDKPGTVWNEMQCEWLVPYEEGTLEAVGYINGKVVNRTSFSTAQQPSKLKTSILKLDAEGSFTDSFIVTSESLDTAGHLYPYGENKVYYHIQGDVKKISMENGNPIDPTSRTKSDFRALFFGKTRTFLRALPEPKEAAVVTAAILGDKALYTSNLITIDAQHIQLLGKSKTSDLEIRYTTNGENPETHGKLYKDAFMVEDDTTVKAIVKQNGKTVLSMEETFGKNEGLFWGDEHSADMWIGRGVDISAEEGVLTGAAKPSREAHRFKGSGFVDFKGGEGSITWYQENDGEPGDYSIRFRYMHNNHGKLHPMKLYVNDEYVRTIEFEPTGGWEKEWKFVPTIIVLQSGANNIKLETTGESGPFIDELFID.

The active-site Proton donor is Glu-432. One can recognise a CBM6 domain in the interval 909–1034 (VDISAEEGVL…GPFIDELFID (126 aa)).

The protein belongs to the glycosyl hydrolase 2 family.

The protein resides in the cytoplasm. The enzyme catalyses a beta-D-glucuronoside + H2O = D-glucuronate + an alcohol. Its function is as follows. Glycoside hydrolase that may be involved in ulvan degradation. Ulvan is the main polysaccharide component of the Ulvales (green seaweed) cell wall. It is composed of disaccharide building blocks comprising 3-sulfated rhamnose (Rha3S) linked to D-glucuronic acid (GlcA), L-iduronic acid (IduA), or D-xylose (Xyl). In Formosa agariphila (strain DSM 15362 / KCTC 12365 / LMG 23005 / KMM 3901 / M-2Alg 35-1), this protein is Putative beta-glucuronidase.